Reading from the N-terminus, the 429-residue chain is Adenylosuccinate synthetase (429 aa).

Residues 12–18 (GDEGKGK) and 40–42 (GHT) each bind GTP. The Proton acceptor role is filled by Asp-13. Positions 13 and 40 each coordinate Mg(2+). Residues 13–16 (DEGK), 38–41 (NAGH), Thr-129, Arg-143, Gln-223, Thr-238, and Arg-302 contribute to the IMP site. The active-site Proton donor is His-41. Substrate is bound at residue 298-304 (TVTGRRR). Residues Arg-304, 330–332 (KLD), and 412–414 (STS) contribute to the GTP site.

This sequence belongs to the adenylosuccinate synthetase family. Homodimer. Requires Mg(2+) as cofactor.

The protein localises to the cytoplasm. It catalyses the reaction IMP + L-aspartate + GTP = N(6)-(1,2-dicarboxyethyl)-AMP + GDP + phosphate + 2 H(+). It functions in the pathway purine metabolism; AMP biosynthesis via de novo pathway; AMP from IMP: step 1/2. Its function is as follows. Plays an important role in the de novo pathway of purine nucleotide biosynthesis. Catalyzes the first committed step in the biosynthesis of AMP from IMP. The chain is Adenylosuccinate synthetase from Zymomonas mobilis subsp. mobilis (strain ATCC 31821 / ZM4 / CP4).